We begin with the raw amino-acid sequence, 196 residues long: Probable GTP-binding protein EngB (196 aa).

The region spanning 22-196 (NLPEIALAGR…GNWIEDKISQ (175 aa)) is the EngB-type G domain. GTP-binding positions include 30-37 (GRSNVGKS), 57-61 (GKTQT), 75-78 (DVPG), 142-145 (TKMD), and 175-177 (FSS). Ser-37 and Thr-59 together coordinate Mg(2+).

The protein belongs to the TRAFAC class TrmE-Era-EngA-EngB-Septin-like GTPase superfamily. EngB GTPase family. Mg(2+) serves as cofactor.

Functionally, necessary for normal cell division and for the maintenance of normal septation. The sequence is that of Probable GTP-binding protein EngB from Lactobacillus acidophilus (strain ATCC 700396 / NCK56 / N2 / NCFM).